A 614-amino-acid chain; its full sequence is Putative ABC transporter ATP-binding protein MA_1747 (614 aa).

ABC transporter domains lie at 11–251 (VRLE…KLGI) and 319–552 (VLIE…AGLL). ATP-binding positions include 45 to 52 (GPSGCGKS) and 352 to 359 (GHNGAGKT).

The protein belongs to the ABC transporter superfamily.

Its subcellular location is the cell membrane. Its function is as follows. Probably part of an ABC transporter complex. Responsible for energy coupling to the transport system. The sequence is that of Putative ABC transporter ATP-binding protein MA_1747 from Methanosarcina acetivorans (strain ATCC 35395 / DSM 2834 / JCM 12185 / C2A).